We begin with the raw amino-acid sequence, 492 residues long: MSIDLNWETVTGGPDGQELADQIRDFIHTKFQSVPLPRFIKSVTVHDFQFGVIPPELELKDITDPLPDFYEDHVDSDVASDDSEGEEDAVDNNLAPPSQGERHQRTDDSEALGGDVRNLGHLPPHLMFGSPGGPGGPGMGSLRNGDMGSPFMRVSTPGIPGGTSNLHYFHSHLGGGLSGTQTPLAAVAGAQHLSTANWLEGHGHSSSVPNLTHFGNPGGAGTSPRRQPERNHSRNPSQGSISVADLNPNSLAPPSSSTLGVPSLKEKHSTTPAPGSATALSGSNEQQQQQQPQDNDDGHPRWREQRIDDMQAVFRIRYAGDVKLLLTADILLDYPMPSFVGIPVRLSITGLTFDGVGVLAKIRKRVHFCFLSPEDAAAAVGGDGEEGLSSPGEGPSQAQGQGQGQGQGQGQGQTPGAGQQKQQKKQAGWVGSGNTKLGGLLQEIRVESEIGQRESGRQSLKNVGKVERFVLEQVRRIFEEEFVYPSFWTFLV.

Residues 1-492 (MSIDLNWETV…VYPSFWTFLV (492 aa)) enclose the SMP-LTD domain. 3 disordered regions span residues 68–158 (DFYE…STPG), 199–301 (LEGH…GHPR), and 379–434 (AVGG…GSGN). Residues 78–90 (VASDDSEGEEDAV) show a composition bias toward acidic residues. Over residues 130–139 (SPGGPGGPGM) the composition is skewed to gly residues. Low complexity predominate over residues 246-257 (LNPNSLAPPSSS). Positions 270 to 285 (TTPAPGSATALSGSNE) are enriched in polar residues. Positions 387–400 (GLSSPGEGPSQAQG) are enriched in low complexity. Residues 401–415 (QGQGQGQGQGQGQTP) are compositionally biased toward gly residues. Residues 416-428 (GAGQQKQQKKQAG) show a composition bias toward low complexity.

The protein belongs to the MDM12 family. Component of the ER-mitochondria encounter structure (ERMES) or MDM complex, composed of MMM1, MDM10, MDM12 and MDM34. An MMM1 homodimer associates with one molecule of MDM12 on each side in a pairwise head-to-tail manner, and the SMP-LTD domains of MMM1 and MDM12 generate a continuous hydrophobic tunnel for phospholipid trafficking.

The protein resides in the mitochondrion outer membrane. Its subcellular location is the endoplasmic reticulum membrane. Its function is as follows. Component of the ERMES/MDM complex, which serves as a molecular tether to connect the endoplasmic reticulum (ER) and mitochondria. Components of this complex are involved in the control of mitochondrial shape and protein biogenesis, and function in nonvesicular lipid trafficking between the ER and mitochondria. MDM12 is required for the interaction of the ER-resident membrane protein MMM1 and the outer mitochondrial membrane-resident beta-barrel protein MDM10. The MDM12-MMM1 subcomplex functions in the major beta-barrel assembly pathway that is responsible for biogenesis of all mitochondrial outer membrane beta-barrel proteins, and acts in a late step after the SAM complex. The MDM10-MDM12-MMM1 subcomplex further acts in the TOM40-specific pathway after the action of the MDM12-MMM1 complex. Essential for establishing and maintaining the structure of mitochondria and maintenance of mtDNA nucleoids. In Chaetomium globosum (strain ATCC 6205 / CBS 148.51 / DSM 1962 / NBRC 6347 / NRRL 1970) (Soil fungus), this protein is Mitochondrial distribution and morphology protein 12.